The chain runs to 650 residues: Chaperone protein HtpG (650 aa).

An a; substrate-binding region spans residues 1–356 (MSTRVETLEF…THDLSLNISR (356 aa)). The segment at 222–245 (AKDRDSNDDGTAESGAGAENAGDR) is disordered. The b stretch occupies residues 357–572 (EILQQDRRIQ…TFDMTPALEK (216 aa)). Residues 573–650 (MYRAMGHEMP…LLAERLAEAL (78 aa)) form a c region.

Belongs to the heat shock protein 90 family. In terms of assembly, homodimer.

The protein localises to the cytoplasm. Functionally, molecular chaperone. Has ATPase activity. This chain is Chaperone protein HtpG, found in Frankia casuarinae (strain DSM 45818 / CECT 9043 / HFP020203 / CcI3).